A 441-amino-acid chain; its full sequence is Serine--tRNA ligase (441 aa).

Residue 250-252 (TSE) participates in L-serine binding. ATP-binding positions include 281–283 (RRE) and Val-297. L-serine is bound at residue Glu-304. 368–371 (EIVS) contacts ATP. Thr-402 is a binding site for L-serine.

The protein belongs to the class-II aminoacyl-tRNA synthetase family. Type-1 seryl-tRNA synthetase subfamily. As to quaternary structure, homodimer. The tRNA molecule binds across the dimer.

Its subcellular location is the cytoplasm. It catalyses the reaction tRNA(Ser) + L-serine + ATP = L-seryl-tRNA(Ser) + AMP + diphosphate + H(+). The catalysed reaction is tRNA(Sec) + L-serine + ATP = L-seryl-tRNA(Sec) + AMP + diphosphate + H(+). It functions in the pathway aminoacyl-tRNA biosynthesis; selenocysteinyl-tRNA(Sec) biosynthesis; L-seryl-tRNA(Sec) from L-serine and tRNA(Sec): step 1/1. Its function is as follows. Catalyzes the attachment of serine to tRNA(Ser). Is also able to aminoacylate tRNA(Sec) with serine, to form the misacylated tRNA L-seryl-tRNA(Sec), which will be further converted into selenocysteinyl-tRNA(Sec). The polypeptide is Serine--tRNA ligase (Thermoplasma acidophilum (strain ATCC 25905 / DSM 1728 / JCM 9062 / NBRC 15155 / AMRC-C165)).